An 89-amino-acid polypeptide reads, in one-letter code: Neuropeptide S (89 aa).

A signal peptide spans 1-23; that stretch reads MIGSLKFNFILFLLISTMHMFWC. Positions 24 to 67 are excised as a propeptide; it reads HPISSSKVPGKSDYFVILLNSCPTRMDRRVGLDFLKPILEKTLM.

The protein resides in the secreted. Modulates arousal and anxiety. May play an important anorexigenic role. Binds to its receptor NPSR1 with nanomolar affinity to increase intracellular calcium concentrations. The sequence is that of Neuropeptide S (NPS) from Bos taurus (Bovine).